The chain runs to 325 residues: Ribosomal RNA small subunit methyltransferase H (325 aa).

S-adenosyl-L-methionine is bound by residues 45 to 47 (GGH), D65, Y92, D113, and Q120.

The protein belongs to the methyltransferase superfamily. RsmH family.

The protein resides in the cytoplasm. It carries out the reaction cytidine(1402) in 16S rRNA + S-adenosyl-L-methionine = N(4)-methylcytidine(1402) in 16S rRNA + S-adenosyl-L-homocysteine + H(+). Specifically methylates the N4 position of cytidine in position 1402 (C1402) of 16S rRNA. The protein is Ribosomal RNA small subunit methyltransferase H of Oleidesulfovibrio alaskensis (strain ATCC BAA-1058 / DSM 17464 / G20) (Desulfovibrio alaskensis).